A 141-amino-acid chain; its full sequence is Putative nickel-responsive regulator (141 aa).

Ni(2+) is bound by residues His80, His91, His93, and Cys99.

This sequence belongs to the transcriptional regulatory CopG/NikR family. Ni(2+) is required as a cofactor.

In terms of biological role, transcriptional regulator. The sequence is that of Putative nickel-responsive regulator from Methanococcus maripaludis (strain C5 / ATCC BAA-1333).